A 267-amino-acid chain; its full sequence is tRNA pseudouridine synthase A (267 aa).

Asp51 acts as the Nucleophile in catalysis. Residue Tyr109 participates in substrate binding.

Belongs to the tRNA pseudouridine synthase TruA family. Homodimer.

It catalyses the reaction uridine(38/39/40) in tRNA = pseudouridine(38/39/40) in tRNA. Its function is as follows. Formation of pseudouridine at positions 38, 39 and 40 in the anticodon stem and loop of transfer RNAs. In Staphylococcus epidermidis (strain ATCC 12228 / FDA PCI 1200), this protein is tRNA pseudouridine synthase A.